A 571-amino-acid polypeptide reads, in one-letter code: Streptolysin O (571 aa).

The signal sequence occupies residues 1 to 33 (MSNKKTFKKYSRVAGLLTVALIIGNLVTANAES). 2 disordered regions span residues 32–56 (ESNKQNTASTETTTTNEQPKPESSE) and 81–108 (KEMPLESAEKEEKKSEDKKKSEEDHTEE). The segment covering 37–48 (NTASTETTTTNE) has biased composition (low complexity). 4 beta stranded membrane-spanning segments follow: residues 260–273 (KSQIEAALNVNSKI), 280–289 (IDFKSISKGE), 358–367 (SNDVEAAFSA), and 375–387 (KTNGKYSDILENS). Positions 529–539 (ECTGLAWEWWR) match the Conserved undecapeptide motif. Residue threonine 561 is a short sequence motif, cholesterol binding.

This sequence belongs to the cholesterol-dependent cytolysin family. As to quaternary structure, homooligomeric pore complex of 35 to 50 subunits; when inserted in the host membrane.

Its subcellular location is the secreted. It is found in the host cell membrane. A cholesterol-dependent toxin that causes cytolysis by forming pores in cholesterol containing host membranes. After binding to target membranes, the protein undergoes a major conformation change, leading to its insertion in the host membrane and formation of an oligomeric pore complex. Cholesterol is required for binding to host membranes, membrane insertion and pore formation; cholesterol binding is mediated by a Thr-Leu pair in the C-terminus. Can be reversibly inactivated by oxidation. The polypeptide is Streptolysin O (slo) (Streptococcus pyogenes serotype M6 (strain ATCC BAA-946 / MGAS10394)).